A 539-amino-acid polypeptide reads, in one-letter code: GMP synthase [glutamine-hydrolyzing] (539 aa).

The region spanning 4 to 202 (KILILDFGSQ…VLQIAGAKPD (199 aa)) is the Glutamine amidotransferase type-1 domain. C81 functions as the Nucleophile in the catalytic mechanism. Catalysis depends on residues H176 and E178. A GMPS ATP-PPase domain is found at 203-395 (WIMKNHIEEA…LGLPPEMVYR (193 aa)). Residue 230–236 (SGGVDSS) participates in ATP binding.

In terms of assembly, homodimer.

It carries out the reaction XMP + L-glutamine + ATP + H2O = GMP + L-glutamate + AMP + diphosphate + 2 H(+). It participates in purine metabolism; GMP biosynthesis; GMP from XMP (L-Gln route): step 1/1. Its function is as follows. Catalyzes the synthesis of GMP from XMP. The sequence is that of GMP synthase [glutamine-hydrolyzing] from Burkholderia orbicola (strain AU 1054).